Consider the following 506-residue polypeptide: 2-isopropylmalate synthase (506 aa).

The Pyruvate carboxyltransferase domain maps to I4 to K266. Positions 13, 201, 203, and 237 each coordinate Mn(2+). A regulatory domain region spans residues N390–K506.

The protein belongs to the alpha-IPM synthase/homocitrate synthase family. LeuA type 1 subfamily. Homodimer. Mn(2+) serves as cofactor.

It localises to the cytoplasm. It catalyses the reaction 3-methyl-2-oxobutanoate + acetyl-CoA + H2O = (2S)-2-isopropylmalate + CoA + H(+). It functions in the pathway amino-acid biosynthesis; L-leucine biosynthesis; L-leucine from 3-methyl-2-oxobutanoate: step 1/4. Catalyzes the condensation of the acetyl group of acetyl-CoA with 3-methyl-2-oxobutanoate (2-ketoisovalerate) to form 3-carboxy-3-hydroxy-4-methylpentanoate (2-isopropylmalate). The sequence is that of 2-isopropylmalate synthase from Bacillus cereus (strain AH820).